The primary structure comprises 738 residues: Putative cyclic nucleotide-gated ion channel 7 (738 aa).

Residues 1–104 are Cytoplasmic-facing; that stretch reads MYKSQYISGQ…DKTLLVWNRL (104 aa). A helical membrane pass occupies residues 105–125; the sequence is FVISCILAVSVDPLFFYLPIV. Residues 126-139 are Extracellular-facing; it reads DNSGSSCIGIDTKL. The helical transmembrane segment at 140–160 threads the bilayer; it reads AVTTTTLRTIVDVFYLTRMAL. Over 161–193 the chain is Cytoplasmic; the sequence is QFRTAYIAPSSRVFGRGELVIDPAKIAERYLTR. The chain crosses the membrane as a helical span at residues 194–214; it reads YFVVDFLAVLPLPQIAVWKFL. Residues 215 to 227 lie on the Extracellular side of the membrane; it reads HGSKGSDVLPTKT. Residues 228–248 form a helical membrane-spanning segment; the sequence is ALLNIVIVQYIPRFVRFIPLT. Residues 249 to 268 lie on the Cytoplasmic side of the membrane; that stretch reads SELKKTAGAFAEGAWAGAAY. Residues 269-289 traverse the membrane as a helical segment; the sequence is YLLWYMLASHITGAFWYMLSV. Residues 290–395 lie on the Extracellular side of the membrane; the sequence is ERNDTCWRFA…GQGLQTSTFP (106 aa). A helical transmembrane segment spans residues 396-416; that stretch reads GEVLFSIAIAIAGLLLFALLI. At 417–738 the chain is on the cytoplasmic side; that stretch reads GNMQTYLQSL…KPPEPDFDAE (322 aa). A nucleoside 3',5'-cyclic phosphate-binding positions include 502-632 and Glu-573; that span reads LFAN…TFRF. The segment at 618 to 633 is calmodulin-binding; sequence FRRLHSRQVQQTFRFY. The region spanning 638 to 667 is the IQ domain; it reads RTWASCFIQAAWRRYSRRKNAELRRIEEKE. Disordered regions lie at residues 671–693 and 715–738; these read GYED…SESS and LRSS…FDAE.

Belongs to the cyclic nucleotide-gated cation channel (TC 1.A.1.5) family. As to quaternary structure, homotetramer or heterotetramer.

The protein resides in the cell membrane. Its function is as follows. Putative cyclic nucleotide-gated ion channel. This Arabidopsis thaliana (Mouse-ear cress) protein is Putative cyclic nucleotide-gated ion channel 7 (CNGC7).